Here is a 1256-residue protein sequence, read N- to C-terminus: Octopamine receptor beta-3R (1256 aa).

Residues 1–143 (MSGVNVADLL…LDLSLLLLKG (143 aa)) lie on the Extracellular side of the membrane. Asn-36, Asn-113, and Asn-117 each carry an N-linked (GlcNAc...) asparagine glycan. The helical transmembrane segment at 144-164 (FIFSSIILAAVLGNALVIISV) threads the bilayer. The Cytoplasmic portion of the chain corresponds to 165-171 (QRNRKLR). A helical transmembrane segment spans residues 172–192 (VITNYFVVSLAMADMLVALCA). The Extracellular segment spans residues 193–213 (MTFNASVELSGGKWMFGPFMC). A glycan (N-linked (GlcNAc...) asparagine) is linked at Asn-196. The helical transmembrane segment at 214 to 236 (NVYNSLDVYFSTASILHLCCISV) threads the bilayer. Residues 237–258 (DRYYAIVRPLEYPLNMTHKTVC) lie on the Cytoplasmic side of the membrane. The helical transmembrane segment at 259–279 (FMLANVWILPALISFTPIFLG) threads the bilayer. Residues 280–305 (WYTTEEHLREISLHPDQCSFVVNKAY) lie on the Extracellular side of the membrane. The helical transmembrane segment at 306 to 326 (ALISSSVSFWIPGIVMLVMYW) threads the bilayer. Topologically, residues 327–1169 (RIFKEAIRQR…WKAEHKAART (843 aa)) are cytoplasmic. Disordered regions lie at residues 377-427 (AREE…DLRD), 480-512 (ELDK…ESTA), 665-698 (LSHS…NKPD), 751-774 (GESP…EPSG), and 1087-1117 (DTTV…SSTR). Positions 396–406 (TDEDDDRDECD) are enriched in acidic residues. Polar residues predominate over residues 489–498 (NGPQQQLSLT). A compositionally biased stretch (pro residues) spans 757–770 (PATPPPSLSPPELP). The helical transmembrane segment at 1170-1190 (LGIIMGVFLLCWLPFFLWYVI) threads the bilayer. Residues 1191 to 1202 (TSLCGPACPCPD) lie on the Extracellular side of the membrane. A helical transmembrane segment spans residues 1203-1223 (VLVVVLFWIGYFNSTLNPLIY). The Cytoplasmic portion of the chain corresponds to 1224-1256 (AYFNRDFREAFRNTLECVLPCLEKRNPYNAYYV).

Belongs to the G-protein coupled receptor 1 family. As to expression, in the adult, expressed in the inferior and superior protocerebrum, the posterior lateral protocerebrum, the deutocerebrum, the surface of the subesophageal ganglion, the lateral cell body region, the cortical layer of the ventral nerve cord and the optic lobe medulla of the central nervous system (CNS). Also expressed in the nurse cells and follicle cells of the egg chambers in the ovary at oogenic stages 1-10, and spermatogonia and spermatocytes in the testis. Expressed ubiquitously in the embryonic CNS. In larvae, expressed in the ventral cortical layer of the ventral nerve cord, the cortical layer of the brain lobes, salivary glands, midgut, imaginal disks and developing reproductive organs. Expressed in the larval prothoracic gland with weak expression in other regions of the ring gland.

Its subcellular location is the cell membrane. Functionally, autoreceptor for octopamine, which is a neurotransmitter, neurohormone, and neuromodulator in invertebrates. Probably also acts as a receptor for tyramine during ecdysone biosynthesis. Required for the biosynthesis of the steroid hormone ecdysone which is necessary for metamorphosis. Involved in activation of prothoracicotropic hormone and insulin-like peptide signaling which is required for the expression of ecdysone biosynthetic genes. The chain is Octopamine receptor beta-3R from Drosophila melanogaster (Fruit fly).